Reading from the N-terminus, the 157-residue chain is S-ribosylhomocysteine lyase (157 aa).

His-54, His-58, and Cys-126 together coordinate Fe cation.

Belongs to the LuxS family. In terms of assembly, homodimer. Fe cation serves as cofactor.

It catalyses the reaction S-(5-deoxy-D-ribos-5-yl)-L-homocysteine = (S)-4,5-dihydroxypentane-2,3-dione + L-homocysteine. Its function is as follows. Involved in the synthesis of autoinducer 2 (AI-2) which is secreted by bacteria and is used to communicate both the cell density and the metabolic potential of the environment. The regulation of gene expression in response to changes in cell density is called quorum sensing. Catalyzes the transformation of S-ribosylhomocysteine (RHC) to homocysteine (HC) and 4,5-dihydroxy-2,3-pentadione (DPD). This chain is S-ribosylhomocysteine lyase, found in Bacillus pumilus (strain SAFR-032).